Here is a 2130-residue protein sequence, read N- to C-terminus: MAAAGEAIDGVYSVRLVIADFYMEKPQFGMDPCYSELRGKEIKRVPVIRVFGGNSRGQKTCMHVHGVFPYLYIPYDKKDFESLERGILQMAMHLDKAINISLGQGSSNAQHVFKIQLVKGIPFYGYHRVEHQFLKIYMFNPRFVRRAANLLQSGAILSKNFSPHESHVPYILQFMIDYNLYGMSYVHVPLEVLKFRRNHDDDVIPYANVKQAQLLDITTAKKVACSALEVDVSSNFILNRFQLVAKSKSNHTNPGIEAIWNDEKLRRQKLVEKHTDAGDEEKAEAVPVLELPPTQERHQIEIAESDIFYRTALESKLMTLEQSTLSEQTLSDQTILPQATMQTTMPGTKAQKRRFNLQKLLANAVYPEECSQDQQQLLVNASFIQNHVTCGYSSSVSLSTSKDESDDLDETVVDEELILSLTQPHGAIPHDATLREEDLELLDALQLLEEQNESESHVDLDSSLAPLSQHKKFELTPELLDKETAATAALFDEDVDSDEDADQETRHDFSTVLDDVDELLLKLTQSQPAESKELKASSKLPQIDGADDRLQRTPIKSISSKSKSSPSKTPTTPIGQKSLPKSPRTPKTSAAKKYAPLALTIGSSSSKKSNDEFAGRPSNPRLSLQLDQGTGTGTLRPEISLRKKLAMSEMRRKSFEDSFVLLKNDCTPVRSTRRSTSNLDKTHIICSLTPRDRNPGLSDMFETEDGKQLPPKKVVRKTRWSTRNQDIESLPKAGCEIERPHRSEGSALDELKPRRSARHKVNSANPDECSSEIQTTGPRVTTTSLDRPQKKARLSQSPKENTKTSMNGTVALEKATKDSSSNSESPHQQENSVSEQIEYLESKPKKSDETARSCDEKLQRELIPQEPAGISPGDSANSTEEITFSPCHDEAIESDTESDYIVTKLRKTPNLKRLRWSIRSELLNKQFTPSSGIRPPETETTPQLSPKSNESNTPELMRSFYEHSLIVNSPSVFSDFLDSPEIHMDSPRSAPPSPDSNSFVIAPLELPPSYDEVVSGSRKMDIPEYEFQKPYYSNPSDVSKVTEVGFLVLHIPGNKLNDCDPFQSILGNDRGLASWRRRQLIAIGGLAMLQRHRGEQKVREYFSTQQRIAIEPAQLAPTWQEAKIWLKAKELLRQREEPKKSSDDIDSPIKIKRQKITMMLQAEEGDGGSGDEDAGEELDCSLSLTPLSQAKDKCKATPTSSKARETGKSRLKRGTRLSFIGSQDEEPPSSQSSEQSVSSSAAQAELDRSSFLRQLEGSSQDRQHDLSFGLSHATLDNTFGFKVNLENLQQAKADIDCNHLTIITLEVFVSTRGDLQPDPMHDEIRCLFYAIEHSLPDEKLPSKACGYIMVNTVQDLLSEGPFHGIDRDIEVQVVTSEAEAFEALLALCERWDADIYAGYEIEMSSWGYVIDRAKHLCFNIAPLLSRVPTQKVRDFVDEDREQFTDLDVEMKLCGRILLDVWRLMRSEIALTSYTFENVMYHILHKRCPWHTAKSLTEWFGSPCTRWIVMEYYLERVRGTLTLLDQLDLLGRTSEMAKLIGIQFYEVLSRGSQFRVESMMLRIAKPKNLVPLSPSVQARAHMRAPEYLALIMEPQSRFYADPLIVLDFQSLYPSMIIAYNYCFSTCLGRVEHLGGSSPFEFGASQLRVSRQMLQKLLEHDLVTVSPCGVVFVKREVREGILPRMLTEILDTRQMVKQSMKLHKDSSALQRILHSRQLGLKLMANVTYGYTAANFSGRMPSVEVGDSVVSKGRETLERAIKLVENNEEWKVRVVYGDTDSMFVLVPGRNRAEAFRIGEEIAKAVTEMNPQPVKLKLEKVYQPCMLQTKKRYVGYMYETADQEQPVYEAKGIETVRRDGCPAVAKMLEKVLRILFETQDVSKIKAYVCRQFTKLLSGRANLQDLIFAKEFRGLNGYKPTACVPALELTRKWMQKDPRHVPRRGERVPFIIVNGPPGMQLIRLVRSPHDILANEGHKINAIYYITKAIIPPLNRCLLLIGANVHDWFASLPRKLLMTPAVGTANELAGARGAKSTISQYFSTTSCVIDCGRQTKAGICPDCLKNATTCVVVLSDKTARLERGYQLTRQICQACCGRLGSLQCDSLDCPVLYVLEGKRRELQQIEHWNKLLEHHF.

Disordered regions lie at residues 528 to 635 (PAES…TGTL), 734 to 891 (GCEI…HDEA), 927 to 954 (FTPSSGIRPPETETTPQLSPKSNESNTP), and 1189 to 1243 (QAKD…SAAQ). Residues 553–574 (TPIKSISSKSKSSPSKTPTTPI) are compositionally biased toward low complexity. Residues 620-629 (PRLSLQLDQG) are compositionally biased toward polar residues. Positions 735-753 (CEIERPHRSEGSALDELKP) are enriched in basic and acidic residues. Composition is skewed to polar residues over residues 771 to 786 (SEIQTTGPRVTTTSLD), 794 to 808 (LSQSPKENTKTSMNG), and 818 to 835 (DSSSNSESPHQQENSVSE). Residues 840–860 (LESKPKKSDETARSCDEKLQR) are compositionally biased toward basic and acidic residues. A compositionally biased stretch (polar residues) spans 938 to 954 (TETTPQLSPKSNESNTP). Positions 1228 to 1243 (PSSQSSEQSVSSSAAQ) are enriched in low complexity. Positions 2041, 2045, 2054, and 2057 each coordinate Zn(2+). [4Fe-4S] cluster is bound by residues Cys2086, Cys2089, Cys2098, and Cys2103. A CysB motif motif is present at residues 2086 to 2103 (CQACCGRLGSLQCDSLDC).

This sequence belongs to the DNA polymerase type-B family. As to quaternary structure, catalytic subunit of the zeta DNA polymerase complex, which consists of PolZ1/DNApol-zeta and the accessory component PolZ2/Rev7. Interacts with the apurinic/apyrimidinic (AP) endonuclease Rrp1; the interaction is likely indirect and mediated via PolZ2. The cofactor is [4Fe-4S] cluster.

The enzyme catalyses DNA(n) + a 2'-deoxyribonucleoside 5'-triphosphate = DNA(n+1) + diphosphate. With respect to regulation, inhibited by tetracyclic diterpene antibiotic aphidicolin. As the catalytic subunit of the DNA polymerase zeta complex, plays a crucial role in translesion DNA synthesis (TLS) and various DNA repair mechanisms. Lacks an intrinsic 3'-5' exonuclease activity and thus has no proofreading function. During homologous recombination (HR) repair, has a overlapping role with the error-prone translesion polymerase eta to initiate repair synthesis which is completed by end joining or another polymerase that can bind and reinitiate synthesis. May participate in the Rrp1-dependent base excision repair (BER) pathway responsible for repair of DNA lesions that gives rise to apurinic/apyrimidinic (AP) sites. Unlike mammalian orthologs, it is not an error-prone polymerase. In Drosophila melanogaster (Fruit fly), this protein is DNA polymerase zeta catalytic subunit.